The following is a 198-amino-acid chain: Recombination protein RecR (198 aa).

The segment at 57–72 adopts a C4-type zinc-finger fold; that stretch reads CPVCFNITDAERCDVC. In terms of domain architecture, Toprim spans 80–173; that stretch reads NLICVVEEPG…VVSRIAYGLP (94 aa).

It belongs to the RecR family.

May play a role in DNA repair. It seems to be involved in an RecBC-independent recombinational process of DNA repair. It may act with RecF and RecO. The sequence is that of Recombination protein RecR from Deinococcus deserti (strain DSM 17065 / CIP 109153 / LMG 22923 / VCD115).